Here is a 46-residue protein sequence, read N- to C-terminus: Myoregulin (46 aa).

The Cytoplasmic portion of the chain corresponds to 1–21; sequence MTGKNWILISTTTPKSLEDEI. A helical membrane pass occupies residues 22–42; that stretch reads VGRLLKILFVIFVDLISIIYV. Residues 43–46 are Lumenal-facing; the sequence is VITS.

In terms of assembly, homooligomer. Monomer. Interacts with ATP2A1/SERCA1. Interacts as a monomer with ATP2A2/SERCA2; the interaction inhibits ATP2A2 activity.

The protein localises to the sarcoplasmic reticulum membrane. Functionally, inhibits the activity of ATP2A1/SERCA1 ATPase in sarcoplasmic reticulum by decreasing the apparent affinity of the ATPase for Ca(2+), thereby acting as a key regulator of skeletal muscle activity. Its high expression in adult skeletal muscle, suggests that it constitutes the predominant regulator of ATP2A1/SERCA1 in adult skeletal muscle. Also inhibits the activity of ATP2A2/SERCA2 and ATP2A3/SERCA3. In Homo sapiens (Human), this protein is Myoregulin.